Here is a 608-residue protein sequence, read N- to C-terminus: MQRSRASSTSSGRLQASQQVQPLDAPKIIVIHPGSQHLRIGRACDLNPLTMLHAVAYKRKHQEGDWPYHDPMLPSLDNINPAQLQVEFEEQRLIASRILQNCVIDDKQRLRVATPPQQLAHFNRKSVAEKIPPPGNLSEERNRQWLDRDAPVLFDEQILRLSTFDARDYDIHFPIQRGELNVHKQKGGSLQCTLQHIERIWSYALEARLKINLRDLRTHSAVLVVNDVYVRRHLREFMTLLLQRLGFQRCFLVQDSVASTYGAGIGFGCVVDIGAQKTSIACIEDGISQLNSRVRLQYGGGDINQVLLMLLRKCGFPYRECSVQDSYVDARLMDKLKERFCHLNAKVCGAQEKQFHLRKQNGQWLRYTLQVGDEAIMAPLAFFHTELLNITGKARKAFTQQPPQEQYDCEDCFDAEYLRETGRKNGARAADPIVAQLLAQPRPLPPITADDEELNVVDQDEPSSNGVAVHNTSSPSVGHAQKHFADTANGVYQYGQGQVMPLDQAVLEAIGRCATNETKRKMYGSILLVGSSVKIPGLAAWLQSCISQQVQPGTEVNVFTKGMDAGMVAWKGAAIMSVLESARELWITQVDWSRHGLRLLRERSPFLW.

The disordered stretch occupies residues M1–V20. D272 to A275 is a binding site for ATP.

The protein belongs to the actin family. ARP8 subfamily. As to quaternary structure, component of the chromatin remodeling Ino80 complex. Exists as monomers and dimers, but the dimer is most probably the biologically relevant form required for stable interactions with histones that exploits the twofold symmetry of the nucleosome core.

Its subcellular location is the nucleus. Plays an important role in the functional organization of mitotic chromosomes. Exhibits low basal ATPase activity, and unable to polymerize. In terms of biological role, proposed core component of the chromatin remodeling INO80 complex which is involved in transcriptional regulation, DNA replication and probably DNA repair. Strongly prefer nucleosomes and H3-H4 tetramers over H2A-H2B dimers, suggesting it may act as a nucleosome recognition module within the complex. This chain is Actin-related protein 8, found in Drosophila pseudoobscura pseudoobscura (Fruit fly).